The sequence spans 943 residues: Isoleucine--tRNA ligase (943 aa).

The 'HIGH' region motif lies at 59 to 69; the sequence is PYANGQIHLGH. Position 577 (glutamate 577) interacts with L-isoleucyl-5'-AMP. The 'KMSKS' region motif lies at 618 to 622; it reads KMSKS. Lysine 621 is an ATP binding site. Residues cysteine 906, cysteine 909, cysteine 926, and cysteine 929 each contribute to the Zn(2+) site.

It belongs to the class-I aminoacyl-tRNA synthetase family. IleS type 1 subfamily. Monomer. Requires Zn(2+) as cofactor.

It is found in the cytoplasm. It carries out the reaction tRNA(Ile) + L-isoleucine + ATP = L-isoleucyl-tRNA(Ile) + AMP + diphosphate. Functionally, catalyzes the attachment of isoleucine to tRNA(Ile). As IleRS can inadvertently accommodate and process structurally similar amino acids such as valine, to avoid such errors it has two additional distinct tRNA(Ile)-dependent editing activities. One activity is designated as 'pretransfer' editing and involves the hydrolysis of activated Val-AMP. The other activity is designated 'posttransfer' editing and involves deacylation of mischarged Val-tRNA(Ile). The polypeptide is Isoleucine--tRNA ligase (Xanthomonas campestris pv. campestris (strain B100)).